We begin with the raw amino-acid sequence, 617 residues long: Pyrophosphate--fructose 6-phosphate 1-phosphotransferase subunit alpha 2 (617 aa).

The protein belongs to the phosphofructokinase type A (PFKA) family. PPi-dependent PFK group II subfamily. Clade 'Long' sub-subfamily. As to quaternary structure, tetramer of two alpha (regulatory) and two beta (catalytic) chains. In terms of tissue distribution, expressed in roots and specific parts such as the trichomes of leaves, cotyledon veins, as well as in stamen and gynoecium of flowers.

It is found in the cytoplasm. It functions in the pathway carbohydrate degradation; glycolysis; D-glyceraldehyde 3-phosphate and glycerone phosphate from D-glucose: step 3/4. With respect to regulation, allosterically activated by fructose 2,6-bisphosphate. Its function is as follows. Regulatory subunit of pyrophosphate--fructose 6-phosphate 1-phosphotransferase. The chain is Pyrophosphate--fructose 6-phosphate 1-phosphotransferase subunit alpha 2 from Arabidopsis thaliana (Mouse-ear cress).